The sequence spans 421 residues: Solute carrier family 35 member F3 (421 aa).

Residues 25–45 (EGEERPRDSPGPAEAQAPAGV) form a disordered region. 10 consecutive transmembrane segments (helical) span residues 66–86 (IFWG…STQL), 98–118 (FTLT…YYVG), 149–169 (VFFT…YLYL), 179–199 (DVSV…WIVL), 208–228 (IVAA…DGFH), 232–252 (VIGI…KVLF), 266–286 (LFLS…PIIL), 305–325 (LCGF…GIAV), 326–346 (TYPT…AVID), and 352–372 (IVFN…FLLL). The segment at 393 to 421 (KKEEPAEGAADLSSGPQSKNRRARPSFAR) is disordered. The segment covering 411 to 421 (KNRRARPSFAR) has biased composition (basic residues).

Belongs to the SLC35F solute transporter family. Expressed at the highest levels in the adult cerebellum.

The protein localises to the membrane. It carries out the reaction thiamine(in) = thiamine(out). Mediates thiamine transport. This is Solute carrier family 35 member F3 from Homo sapiens (Human).